The sequence spans 178 residues: Ribosome maturation factor RimM (178 aa).

The region spanning 94 to 174 (KNEFFWFDLI…RIDVINSFDI (81 aa)) is the PRC barrel domain.

Belongs to the RimM family. As to quaternary structure, binds ribosomal protein uS19.

It is found in the cytoplasm. Functionally, an accessory protein needed during the final step in the assembly of 30S ribosomal subunit, possibly for assembly of the head region. Essential for efficient processing of 16S rRNA. May be needed both before and after RbfA during the maturation of 16S rRNA. It has affinity for free ribosomal 30S subunits but not for 70S ribosomes. This is Ribosome maturation factor RimM from Aliarcobacter butzleri (strain RM4018) (Arcobacter butzleri).